The primary structure comprises 30 residues: Photosystem I reaction center subunit XII (30 aa).

The helical transmembrane segment at 5 to 25 threads the bilayer; the sequence is SQIFFALCIALTAAVLAIGLG.

This sequence belongs to the PsaM family.

It is found in the plastid. The protein resides in the chloroplast thylakoid membrane. The chain is Photosystem I reaction center subunit XII from Emiliania huxleyi (Coccolithophore).